The sequence spans 1625 residues: Probable cation-transporting ATPase I (1625 aa).

8 helical membrane-spanning segments follow: residues 148-168, 177-197, 358-378, 637-657, 673-693, 778-798, 968-988, and 997-1017; these read VVSA…PNSA, LAIL…GATV, LIAA…AGAI, ASES…LLLV, WLNP…WSAA, ILAV…ALLV, LTSK…ALAL, and AVAD…PLVA. D1053 functions as the 4-aspartylphosphate intermediate in the catalytic mechanism. The Mg(2+) site is built by D1340 and D1344. The next 3 helical transmembrane spans lie at 1401-1421, 1432-1452, and 1547-1567; these read ILVG…AFGA, LLVN…TSQF, and VIAT…TPVI.

This sequence belongs to the cation transport ATPase (P-type) (TC 3.A.3) family.

The protein resides in the cell membrane. The catalysed reaction is ATP + H2O = ADP + phosphate + H(+). The sequence is that of Probable cation-transporting ATPase I (ctpI) from Mycobacterium tuberculosis (strain CDC 1551 / Oshkosh).